A 513-amino-acid polypeptide reads, in one-letter code: Plexin domain-containing protein 2 (513 aa).

Positions 1-24 (MGARSESLVGVVLLFQLLADRLWC) are cleaved as a signal peptide. Topologically, residues 25 to 438 (AATASDSLYD…AEMKTGTLHT (414 aa)) are extracellular. Asparagine 88, asparagine 145, asparagine 198, asparagine 206, asparagine 222, and asparagine 330 each carry an N-linked (GlcNAc...) asparagine glycan. Residues 312–357 (TCLQFNSCSSCVSSMIGFNCSWCNIPQRCSSGFDRHRQDWVENGCT) enclose the PSI domain. The helical transmembrane segment at 439–459 (GLIIGILILVLLIITAILVAV) threads the bilayer. The Cytoplasmic segment spans residues 460 to 513 (YMYHHPTSSASLFLIERRPSRWPAMKFRRGSGHPAYAEVEPIGEKEGFIVSEQC).

This sequence belongs to the plexin family.

It is found in the membrane. In Xenopus laevis (African clawed frog), this protein is Plexin domain-containing protein 2 (plxdc2).